A 265-amino-acid chain; its full sequence is Mlc titration factor A (265 aa).

His111, His148, His152, and Glu211 together coordinate Zn(2+).

This sequence belongs to the MtfA family. As to quaternary structure, interacts with Mlc. It depends on Zn(2+) as a cofactor.

It is found in the cytoplasm. In terms of biological role, involved in the modulation of the activity of the glucose-phosphotransferase system (glucose-PTS). Interacts with the transcriptional repressor Mlc, preventing its interaction with DNA and leading to the modulation of expression of genes regulated by Mlc, including ptsG, which encodes the PTS system glucose-specific EIICB component. Its function is as follows. Shows zinc-dependent metallopeptidase activity. This is Mlc titration factor A from Escherichia fergusonii (strain ATCC 35469 / DSM 13698 / CCUG 18766 / IAM 14443 / JCM 21226 / LMG 7866 / NBRC 102419 / NCTC 12128 / CDC 0568-73).